Reading from the N-terminus, the 241-residue chain is DNA repair protein RecO (241 aa).

This sequence belongs to the RecO family.

Functionally, involved in DNA repair and RecF pathway recombination. This chain is DNA repair protein RecO, found in Rickettsia bellii (strain OSU 85-389).